A 245-amino-acid chain; its full sequence is Purine nucleoside phosphorylase (245 aa).

Position 7 (His7) interacts with a purine D-ribonucleoside. Residues 23 to 27 (GDPGR), Arg45, and 88 to 91 (RAGS) contribute to the phosphate site. Position 183-184 (183-184 (ME)) interacts with a purine D-ribonucleoside. The Proton donor role is filled by Asp206.

Belongs to the PNP/MTAP phosphorylase family. In terms of assembly, homohexamer; trimer of homodimers.

The catalysed reaction is inosine + phosphate = alpha-D-ribose 1-phosphate + hypoxanthine. The enzyme catalyses guanosine + phosphate = alpha-D-ribose 1-phosphate + guanine. It carries out the reaction 2'-deoxyguanosine + phosphate = 2-deoxy-alpha-D-ribose 1-phosphate + guanine. It catalyses the reaction 2'-deoxyinosine + phosphate = 2-deoxy-alpha-D-ribose 1-phosphate + hypoxanthine. The catalysed reaction is S-methyl-5'-thioinosine + phosphate = 5-(methylsulfanyl)-alpha-D-ribose 1-phosphate + hypoxanthine. The protein operates within purine metabolism; purine nucleoside salvage. Its activity is regulated as follows. Inhibited by Immucillin-H and 5'-methylthio-Immucillin-H. Inhibited by 5'-deaza-1'-aza-2c-deoxy-1'-(9-methylene)-Immucilin-G (DADMe-ImmG). In terms of biological role, as part of the purine salvage pathway, catalyzes the phosphorolytic breakdown of the N-glycosidic bond in the beta-(deoxy)ribonucleoside molecules, with the formation of the corresponding free purine bases and pentose-1-phosphate. Preferentially acts on inosine and guanosine, and to a lesser extent on 2'-deoxyguanosine and guanosine. Also catalyzes the phosphorylation of S-methyl-5'-thioinosine (MTI) to hypoxanthine; MTI is produced by adenosine deaminase (ADA)-mediated breakdown of S-methyl-5'-thioadenosine (MTA), a major by-product of polyamine biosynthesis. Generates hypoxanthine from both the purine salvage pathway and from polyamine metabolism which is required for nucleic acids synthesis. Has no activity towards adenosine. The polypeptide is Purine nucleoside phosphorylase (Plasmodium falciparum (isolate 3D7)).